A 250-amino-acid polypeptide reads, in one-letter code: Ribosomal RNA small subunit methyltransferase J (250 aa).

S-adenosyl-L-methionine contacts are provided by residues 101–102 (RD), 117–118 (ER), 153–154 (SS), and Asp171.

This sequence belongs to the methyltransferase superfamily. RsmJ family.

Its subcellular location is the cytoplasm. It carries out the reaction guanosine(1516) in 16S rRNA + S-adenosyl-L-methionine = N(2)-methylguanosine(1516) in 16S rRNA + S-adenosyl-L-homocysteine + H(+). Specifically methylates the guanosine in position 1516 of 16S rRNA. This Escherichia coli (strain UTI89 / UPEC) protein is Ribosomal RNA small subunit methyltransferase J.